Here is a 316-residue protein sequence, read N- to C-terminus: Transcription factor MafB (316 aa).

Disordered stretches follow at residues 40 to 78 (PDRA…SPTE) and 116 to 204 (HQMP…EDRF). Positions 55 to 77 (SVSSTPISTPCSSVPSSPSFSPT) are enriched in low complexity. 2 stretches are compositionally biased toward basic residues: residues 130 to 144 (GHHH…HQNH) and 160 to 172 (QHPH…HHHQ). Residues 177–198 (PSGSSSSSQQLQNSHQQHQNSS) show a composition bias toward low complexity. Residues 231-256 (RLKQKRRTLKNRGYAQSCRFKRVQQK) form a basic motif region. The bZIP domain occupies 231–294 (RLKQKRRTLK…DAYKIKCEKL (64 aa)). Residues 259-280 (LENEKTQLIQQVEQLKLEVSRL) are leucine-zipper.

The protein belongs to the bZIP family. Maf subfamily. Homodimer or heterodimer with other bHLH-Zip transcription factors. Binds DNA as a homodimer or a heterodimer.

It is found in the nucleus. Acts as a transcriptional activator or repressor. Implicated in the regulation of cell-type specific gene expression and play a role in inductive events during lens development. The protein is Transcription factor MafB (mafb) of Xenopus tropicalis (Western clawed frog).